Consider the following 387-residue polypeptide: Putative glutamate--cysteine ligase 2 (387 aa).

Belongs to the glutamate--cysteine ligase type 2 family. YbdK subfamily.

It catalyses the reaction L-cysteine + L-glutamate + ATP = gamma-L-glutamyl-L-cysteine + ADP + phosphate + H(+). Functionally, ATP-dependent carboxylate-amine ligase which exhibits weak glutamate--cysteine ligase activity. This Trichormus variabilis (strain ATCC 29413 / PCC 7937) (Anabaena variabilis) protein is Putative glutamate--cysteine ligase 2.